Reading from the N-terminus, the 961-residue chain is MAAGGKSFLADAGYGEQELDANSALMELDKGLRSGKLGEQCEAVVRFPRLFQKYPFPILINSAFLKLADVFRVGNNFLRLCVLKVTQQSEKHLEKILNVDEFVKRVFSVIHSNDPVARAITLRMLGSMASIIPERKNAHHSIRQSLDSHDNVEVEAAIFAAANFSAQSKDFAAGICNKISEMIQGLATPVDLKLKLIPILQHMHHDASLASSSRQLLQQLVTSYPSTKMVIVTLHTFTLLAASSLVDIPKQVQLLLQYLKNDPRKAVKRLAIQDLKLLANKIPHTWSRENIQALCESALHTPYDSLKLGMLSVLSTLSGTIAIKQYFSSAPGTAATTARSFDLVKLAQECCYHNNRGIAAHGVRILTNISASCQEKDLLPLEQDAVFGLESLLVLCSQDDSPGAQATLKITLTCMVKLVKCRPHLSQSVVESLLTQLHSAQDAARILMCHCLAAIAMQLPVLADGMLGDLMELYKVIGRSTTDKKQELLVSLATVIFVSSQKALSPEIKTVIKQQLENASNGWTAYRIARQASRMGNHDMARELYQSLLTQVASEHFYFWLNSLKEFSHAEQCLTGLQEDNYSSALSCIAEALKSYHKGIASLTAASTPLNPLSFQCGFVKLRIDLLQAFSQLICTCNSLKTSPPPAIATTIAMTSGNDLQRCGRISNQMKLSMEEFRNLAVRYGDLYQSSFDADSATLRNVELQQQSCLLISHAIEALILDPESANFQEYSSNGAAHVESEYERRMMSVFNHVLEEVESLNRKYAPVSYLHTACLCSAVIALLKVPLSFQRYFFQKLQSTSIKLALSPSPRNPAEPIAVQNNQQLALKVEGVVQHGSKPGLFRKIQSVCLNVSSVLQSKSGQDYKIPIDNMTNEMEQRVEPHNDYFSTQFLLNFVILDTHNITVESSVIDSNGIVWKTGPKTTIFVKSLEDPYSQQVRLQQQQGQPPSQQQQQRTAYSRF.

Residues 937–955 (QVRLQQQQGQPPSQQQQQR) are compositionally biased toward low complexity. The disordered stretch occupies residues 937–961 (QVRLQQQQGQPPSQQQQQRTAYSRF).

Belongs to the Integrator subunit 7 family. In terms of assembly, component of the Integrator complex, composed of core subunits INTS1, INTS2, INTS3, INTS4, INTS5, INTS6, INTS7, INTS8, INTS9/RC74, INTS10, INTS11/CPSF3L, INTS12, INTS13, INTS14 and INTS15. The core complex associates with protein phosphatase 2A subunits PPP2CA and PPP2R1A, to form the Integrator-PP2A (INTAC) complex.

It is found in the nucleus. It localises to the chromosome. The protein localises to the cytoplasm. Its function is as follows. Component of the integrator complex, a multiprotein complex that terminates RNA polymerase II (Pol II) transcription in the promoter-proximal region of genes. The integrator complex provides a quality checkpoint during transcription elongation by driving premature transcription termination of transcripts that are unfavorably configured for transcriptional elongation: the complex terminates transcription by (1) catalyzing dephosphorylation of the C-terminal domain (CTD) of Pol II subunit POLR2A/RPB1 and SUPT5H/SPT5, (2) degrading the exiting nascent RNA transcript via endonuclease activity and (3) promoting the release of Pol II from bound DNA. The integrator complex is also involved in terminating the synthesis of non-coding Pol II transcripts, such as enhancer RNAs (eRNAs), small nuclear RNAs (snRNAs), telomerase RNAs and long non-coding RNAs (lncRNAs). This Gallus gallus (Chicken) protein is Integrator complex subunit 7 (INTS7).